The chain runs to 232 residues: Histone H1-II (232 aa).

The span at Met1 to Ala18 shows a compositional bias: low complexity. 2 disordered regions span residues Met1–Ser44 and Gly103–Ala232. In terms of domain architecture, H15 spans Thr39–Ala114. Composition is skewed to basic residues over residues Ser149–Lys171 and Ala179–Ala232.

Belongs to the histone H1/H5 family.

It localises to the nucleus. It is found in the chromosome. Histones H1 are necessary for the condensation of nucleosome chains into higher-order structures. This is Histone H1-II from Glyptotendipes barbipes (Midge).